The sequence spans 428 residues: AA14 family lytic polysaccharide monooxygenase A (428 aa).

The signal sequence occupies residues 1 to 21 (MLRSLPASLALVAAFASKASA). 2 N-linked (GlcNAc...) asparagine glycosylation sites follow: N34 and N52. Disulfide bonds link C88/C112, C131/C158, C174/C179, C181/C203, and C223/C239. A glycan (N-linked (GlcNAc...) asparagine) is linked at N155. Disordered stretches follow at residues 216-239 (KPAV…PGNC) and 292-428 (SSGT…HNAH). Residues 223–232 (CGADPDHGKP) show a composition bias toward basic and acidic residues. N238 carries an N-linked (GlcNAc...) asparagine glycan. Low complexity predominate over residues 292–379 (SSGTGSSPTS…SVATEASSSP (88 aa)). Over residues 380 to 402 (IASTTVDEAVVSSSTVGSINPTR) the composition is skewed to polar residues. Over residues 414–428 (QKKKRKHARHLHNAH) the composition is skewed to basic residues.

Cu(2+) is required as a cofactor.

The protein localises to the secreted. Functionally, lytic polysaccharide monooxygenase (LPMO) showing oxidase and peroxidase activities that are common for LPMOs. Catalysis by LPMOs requires the reduction of the active-site copper from Cu(II) to Cu(I) by a reducing agent and H(2)O(2) or O(2) as a cosubstrate. Shows no activity on cellulose-associated xylan or any other tested polysaccharide substrate, meaning that the substrate rremains unknown. The protein is AA14 family lytic polysaccharide monooxygenase A of Trametes coccinea (strain BRFM310) (Pycnoporus coccineus).